The primary structure comprises 89 residues: Large ribosomal subunit protein eL34 (89 aa).

The disordered stretch occupies residues 1–29 (MSAPRFRNGTFKRTLKRVPGGRKVEHYKK). Residues 13–29 (RTLKRVPGGRKVEHYKK) are compositionally biased toward basic residues.

It belongs to the eukaryotic ribosomal protein eL34 family.

The protein is Large ribosomal subunit protein eL34 of Methanosphaera stadtmanae (strain ATCC 43021 / DSM 3091 / JCM 11832 / MCB-3).